A 276-amino-acid polypeptide reads, in one-letter code: Shikimate dehydrogenase (NADP(+)) (276 aa).

Shikimate contacts are provided by residues 15-17 (SKS) and T62. K66 serves as the catalytic Proton acceptor. E78 serves as a coordination point for NADP(+). Shikimate is bound by residues N87 and D103. NADP(+) contacts are provided by residues 127–131 (GAGGV), 150–155 (NRTHIK), and M214. Residue Y216 coordinates shikimate. G239 serves as a coordination point for NADP(+).

The protein belongs to the shikimate dehydrogenase family. In terms of assembly, homodimer.

It catalyses the reaction shikimate + NADP(+) = 3-dehydroshikimate + NADPH + H(+). It functions in the pathway metabolic intermediate biosynthesis; chorismate biosynthesis; chorismate from D-erythrose 4-phosphate and phosphoenolpyruvate: step 4/7. Its function is as follows. Involved in the biosynthesis of the chorismate, which leads to the biosynthesis of aromatic amino acids. Catalyzes the reversible NADPH linked reduction of 3-dehydroshikimate (DHSA) to yield shikimate (SA). The protein is Shikimate dehydrogenase (NADP(+)) of Haemophilus ducreyi (strain 35000HP / ATCC 700724).